Consider the following 197-residue polypeptide: Protein GrpE (197 aa).

Residues 1–40 (MSSKEQKTPEGQAPEEIIMDQHEEIEAVEPEASAEQVDPR) are disordered.

This sequence belongs to the GrpE family. Homodimer.

Its subcellular location is the cytoplasm. In terms of biological role, participates actively in the response to hyperosmotic and heat shock by preventing the aggregation of stress-denatured proteins, in association with DnaK and GrpE. It is the nucleotide exchange factor for DnaK and may function as a thermosensor. Unfolded proteins bind initially to DnaJ; upon interaction with the DnaJ-bound protein, DnaK hydrolyzes its bound ATP, resulting in the formation of a stable complex. GrpE releases ADP from DnaK; ATP binding to DnaK triggers the release of the substrate protein, thus completing the reaction cycle. Several rounds of ATP-dependent interactions between DnaJ, DnaK and GrpE are required for fully efficient folding. This Escherichia coli (strain K12 / DH10B) protein is Protein GrpE.